We begin with the raw amino-acid sequence, 103 residues long: N(4)-acetylcytidine amidohydrolase (103 aa).

One can recognise an ASCH domain in the interval 6-94 (ITFFQRFQDD…IAGIYPDQTQ (89 aa)). K21 (proton acceptor) is an active-site residue. T24 (nucleophile) is an active-site residue. The Proton donor role is filled by E74.

This sequence belongs to the N(4)-acetylcytidine amidohydrolase family.

It carries out the reaction N(4)-acetylcytidine + H2O = cytidine + acetate + H(+). The catalysed reaction is N(4)-acetyl-2'-deoxycytidine + H2O = 2'-deoxycytidine + acetate + H(+). The enzyme catalyses N(4)-acetylcytosine + H2O = cytosine + acetate + H(+). Its function is as follows. Catalyzes the hydrolysis of N(4)-acetylcytidine (ac4C). This Citrobacter koseri (strain ATCC BAA-895 / CDC 4225-83 / SGSC4696) protein is N(4)-acetylcytidine amidohydrolase.